Consider the following 62-residue polypeptide: Large ribosomal subunit protein uL30 (62 aa).

This sequence belongs to the universal ribosomal protein uL30 family. Part of the 50S ribosomal subunit.

This Prosthecochloris aestuarii (strain DSM 271 / SK 413) protein is Large ribosomal subunit protein uL30.